A 316-amino-acid chain; its full sequence is Pantothenate kinase (316 aa).

ATP is bound at residue 95-102; that stretch reads GSVSVGKS.

It belongs to the prokaryotic pantothenate kinase family.

It localises to the cytoplasm. It carries out the reaction (R)-pantothenate + ATP = (R)-4'-phosphopantothenate + ADP + H(+). Its pathway is cofactor biosynthesis; coenzyme A biosynthesis; CoA from (R)-pantothenate: step 1/5. The chain is Pantothenate kinase from Haemophilus ducreyi (strain 35000HP / ATCC 700724).